A 366-amino-acid polypeptide reads, in one-letter code: Cobalt-precorrin-5B C(1)-methyltransferase (366 aa).

The protein belongs to the CbiD family.

It carries out the reaction Co-precorrin-5B + S-adenosyl-L-methionine = Co-precorrin-6A + S-adenosyl-L-homocysteine. The protein operates within cofactor biosynthesis; adenosylcobalamin biosynthesis; cob(II)yrinate a,c-diamide from sirohydrochlorin (anaerobic route): step 6/10. Functionally, catalyzes the methylation of C-1 in cobalt-precorrin-5B to form cobalt-precorrin-6A. This is Cobalt-precorrin-5B C(1)-methyltransferase from Methanococcus maripaludis (strain C7 / ATCC BAA-1331).